Reading from the N-terminus, the 475-residue chain is Aspartyl/glutamyl-tRNA(Asn/Gln) amidotransferase subunit B (475 aa).

It belongs to the GatB/GatE family. GatB subfamily. In terms of assembly, heterotrimer of A, B and C subunits.

It carries out the reaction L-glutamyl-tRNA(Gln) + L-glutamine + ATP + H2O = L-glutaminyl-tRNA(Gln) + L-glutamate + ADP + phosphate + H(+). It catalyses the reaction L-aspartyl-tRNA(Asn) + L-glutamine + ATP + H2O = L-asparaginyl-tRNA(Asn) + L-glutamate + ADP + phosphate + 2 H(+). In terms of biological role, allows the formation of correctly charged Asn-tRNA(Asn) or Gln-tRNA(Gln) through the transamidation of misacylated Asp-tRNA(Asn) or Glu-tRNA(Gln) in organisms which lack either or both of asparaginyl-tRNA or glutaminyl-tRNA synthetases. The reaction takes place in the presence of glutamine and ATP through an activated phospho-Asp-tRNA(Asn) or phospho-Glu-tRNA(Gln). The protein is Aspartyl/glutamyl-tRNA(Asn/Gln) amidotransferase subunit B of Staphylococcus aureus (strain bovine RF122 / ET3-1).